A 232-amino-acid chain; its full sequence is Glycerol-3-phosphate acyltransferase (232 aa).

6 consecutive transmembrane segments (helical) span residues 4–24 (FLAIITVAYLIGSIPTSIIAG), 56–76 (AVTLIDIAKGTIAAVPVVAFF), 90–110 (IALNLIAGMSAVIGHVFTVFA), 124–144 (MLIGIAPISMLMVIGVFILAI), 147–167 (TRYVSVGSILAAIAFPLIIAI), and 191–211 (SLDYHLLIFGGIVAAAIIYTH).

This sequence belongs to the PlsY family. In terms of assembly, probably interacts with PlsX.

It is found in the cell inner membrane. It catalyses the reaction an acyl phosphate + sn-glycerol 3-phosphate = a 1-acyl-sn-glycero-3-phosphate + phosphate. Its pathway is lipid metabolism; phospholipid metabolism. In terms of biological role, catalyzes the transfer of an acyl group from acyl-phosphate (acyl-PO(4)) to glycerol-3-phosphate (G3P) to form lysophosphatidic acid (LPA). This enzyme utilizes acyl-phosphate as fatty acyl donor, but not acyl-CoA or acyl-ACP. The sequence is that of Glycerol-3-phosphate acyltransferase from Chlorobaculum parvum (strain DSM 263 / NCIMB 8327) (Chlorobium vibrioforme subsp. thiosulfatophilum).